A 132-amino-acid polypeptide reads, in one-letter code: Large ribosomal subunit protein uL14 (132 aa).

It belongs to the universal ribosomal protein uL14 family. Part of the 50S ribosomal subunit. Forms a cluster with proteins L3 and L24e, part of which may contact the 16S rRNA in 2 intersubunit bridges.

Functionally, binds to 23S rRNA. Forms part of two intersubunit bridges in the 70S ribosome. The chain is Large ribosomal subunit protein uL14 from Methanothrix thermoacetophila (strain DSM 6194 / JCM 14653 / NBRC 101360 / PT) (Methanosaeta thermophila).